A 255-amino-acid polypeptide reads, in one-letter code: ETS-related transcription factor Elf-5 (255 aa).

The PNT domain occupies 33-119 (YPAFEHQTAC…FILQSIRSQG (87 aa)). A DNA-binding region (ETS) is located at residues 163-244 (SHLWEFVRDL…VDRRLVYKFG (82 aa)).

The protein belongs to the ETS family.

The protein resides in the nucleus. Transcriptionally activator that may play a role in regulating the later stages of keratinocytes terminal differentiation. Binds to DNA sequences containing the consensus nucleotide core sequence GGA[AT]. This chain is ETS-related transcription factor Elf-5 (ELF5), found in Bos taurus (Bovine).